The primary structure comprises 92 residues: MARSSKRGPFVANHLIREIRNLNIQKKRKLITTWSRASAIVPIMIGHTIAVHNGREHLPIYVTDRMVGHKLGEFVPTRNFRGHAKSDKGSRR.

Belongs to the universal ribosomal protein uS19 family.

Its subcellular location is the plastid. The protein resides in the chloroplast. Functionally, protein S19 forms a complex with S13 that binds strongly to the 16S ribosomal RNA. The polypeptide is Small ribosomal subunit protein uS19c (Adiantum capillus-veneris (Maidenhair fern)).